Here is a 30-residue protein sequence, read N- to C-terminus: Varv peptide B (30 aa).

A cross-link (cyclopeptide (Gly-Asn)) is located at residues 1–30 (GLPVCGETCFGGTCNTPGCSCDPWPMCSRN). Disulfide bonds link C5–C19, C9–C21, and C14–C27.

Post-translationally, this is a cyclic peptide.

Its function is as follows. Probably participates in a plant defense mechanism. In Viola arvensis (European field pansy), this protein is Varv peptide B.